A 126-amino-acid polypeptide reads, in one-letter code: Protein LiaI (126 aa).

Transmembrane regions (helical) follow at residues 11 to 31 (FLLI…GFII) and 56 to 76 (IIVG…VVGI).

Its subcellular location is the cell membrane. This Bacillus subtilis (strain 168) protein is Protein LiaI (liaI).